The sequence spans 367 residues: Pectate trisaccharide-lyase (367 aa).

Residues 1 to 27 form the signal peptide; it reads MLMRFSRVVSLVLLLVFTAVLTGAVKA. Residues aspartate 144, aspartate 166, and aspartate 170 each coordinate Ca(2+). Residues 151 to 173 form a PbH1 1 repeat; the sequence is SHHIWIDHCTFVNGNDGAVDIKK. Residue arginine 224 is part of the active site. A PbH1 2 repeat occupies 263–289; it reads GAKVHVEGNYFMGYGAVMAEAGIAFLP.

The protein belongs to the polysaccharide lyase 1 family. Homotetramer. Ca(2+) serves as cofactor.

It is found in the secreted. It carries out the reaction eliminative cleavage of unsaturated trigalacturonate as the major product from the reducing end of polygalacturonic acid/pectate.. Its activity is regulated as follows. Completely inactivated by EGTA. Functionally, cleaves unsaturated trigalacturonate from pectin. Activity is highest towards polygalacturonic acid, activity on methylated pectins decreases with an increasing degree of methylation. The polypeptide is Pectate trisaccharide-lyase (Thermotoga maritima (strain ATCC 43589 / DSM 3109 / JCM 10099 / NBRC 100826 / MSB8)).